Here is a 448-residue protein sequence, read N- to C-terminus: StAR-related lipid transfer protein 3 (448 aa).

The MENTAL domain occupies 47 to 219 (FSDVRRTFCL…YSPPESLAGS (173 aa)). Transmembrane regions (helical) follow at residues 53–73 (TFCLFVTFDLLFITLLWIIEL), 96–116 (FFDIFLLAVFRFLCLQLGYAA), 122–142 (WWVIAITTLVTTAFLIAKVIL), and 150–170 (AFGYVLPITSFVVAWLETWFL). The FFAT signature appears at 208–214 (QFYSPPE). The START domain occupies 232–445 (AVTEQEKAFV…LRQRINEVHV (214 aa)).

Belongs to the STARD3 family. Homodimer. In terms of processing, phosphorylated. Phosphorylation allows the tethering of two membranes that participates in the formation of ER-endosome contacts. Phosphorylation of FFAT motif drives membrane tethering between the endoplasmic reticulum and late endosomes that in turn allows the efficient transport of sterol mediated by the START domain.

It localises to the late endosome membrane. The catalysed reaction is cholesterol(in) = cholesterol(out). Its function is as follows. Sterol-binding protein that mediates cholesterol transport from the endoplasmic reticulum to endosomes. The sterol transport mechanism is triggered by phosphorylation of FFAT motif that leads to membrane tethering between the endoplasmic reticulum and late endosomes. Acts as a lipid transfer protein that redirects sterol to the endosome at the expense of the cell membrane and favors membrane formation inside endosomes. In Danio rerio (Zebrafish), this protein is StAR-related lipid transfer protein 3.